The sequence spans 267 residues: Hydroxynaphthalene reductase-like protein Arp2 (267 aa).

Residues I25, N45, D71, and N98 each coordinate NADP(+). Active-site proton donor residues include S147 and S148. The NADP(+) site is built by Y162, K166, V195, and T197. The active-site Proton acceptor is Y162. K166 serves as the catalytic Lowers pKa of active site Tyr.

It belongs to the short-chain dehydrogenases/reductases (SDR) family.

In terms of biological role, hydroxynaphthalene reductase-like protein; part of the Pks2 gene cluster that mediates the formation of infectious structures (appressoria), enabling these fungi to kill insects faster. The product of the Pks2 gene cluster is different from the one of Pks1 and has still not been identified. The polypeptide is Hydroxynaphthalene reductase-like protein Arp2 (Metarhizium guizhouense (strain ARSEF 977)).